A 146-amino-acid chain; its full sequence is Large ribosomal subunit protein uL15 (146 aa).

Residues 1–54 are disordered; it reads MTLRLNELAPAEGAKREHRRLGRGIGSGVGKTGGRGIKGQKSRKSGGVRPGFEG. A compositionally biased stretch (gly residues) spans 23 to 37; that stretch reads RGIGSGVGKTGGRGI.

It belongs to the universal ribosomal protein uL15 family. In terms of assembly, part of the 50S ribosomal subunit.

Functionally, binds to the 23S rRNA. The chain is Large ribosomal subunit protein uL15 from Acinetobacter baumannii (strain SDF).